The following is a 324-amino-acid chain: Glutathione synthetase (324 aa).

The region spanning 133 to 317 (KMYALQFTKA…LAHQVIQWVE (185 aa)) is the ATP-grasp domain. 159-215 (VEAKGATVLKPLGNKAGEGILFLQAGDRNFNSIVELSTQQGRLPVMVQTYLPEAKEG) contributes to the ATP binding site. Residues Glu-288 and Asn-290 each contribute to the Mg(2+) site.

This sequence belongs to the prokaryotic GSH synthase family. The cofactor is Mg(2+). Mn(2+) is required as a cofactor.

It carries out the reaction gamma-L-glutamyl-L-cysteine + glycine + ATP = glutathione + ADP + phosphate + H(+). It participates in sulfur metabolism; glutathione biosynthesis; glutathione from L-cysteine and L-glutamate: step 2/2. The polypeptide is Glutathione synthetase (Nostoc sp. (strain PCC 7120 / SAG 25.82 / UTEX 2576)).